Consider the following 354-residue polypeptide: Methylthioribose-1-phosphate isomerase (354 aa).

Substrate is bound by residues 58 to 60 (RGA), arginine 101, and glutamine 204. Aspartate 245 acts as the Proton donor in catalysis. Residue 255-256 (NK) participates in substrate binding.

Belongs to the eIF-2B alpha/beta/delta subunits family. MtnA subfamily.

The catalysed reaction is 5-(methylsulfanyl)-alpha-D-ribose 1-phosphate = 5-(methylsulfanyl)-D-ribulose 1-phosphate. The protein operates within amino-acid biosynthesis; L-methionine biosynthesis via salvage pathway; L-methionine from S-methyl-5-thio-alpha-D-ribose 1-phosphate: step 1/6. Functionally, catalyzes the interconversion of methylthioribose-1-phosphate (MTR-1-P) into methylthioribulose-1-phosphate (MTRu-1-P). The chain is Methylthioribose-1-phosphate isomerase from Xylella fastidiosa (strain M23).